Here is a 73-residue protein sequence, read N- to C-terminus: Large ribosomal subunit protein bL31 (73 aa).

Belongs to the bacterial ribosomal protein bL31 family. Type A subfamily. Part of the 50S ribosomal subunit.

Its function is as follows. Binds the 23S rRNA. This chain is Large ribosomal subunit protein bL31, found in Chelativorans sp. (strain BNC1).